The chain runs to 201 residues: UPF0301 protein R00917 (201 aa).

It belongs to the UPF0301 (AlgH) family.

This Rhizobium meliloti (strain 1021) (Ensifer meliloti) protein is UPF0301 protein R00917.